The following is a 142-amino-acid chain: Cell division protein SepF (142 aa).

It belongs to the SepF family. As to quaternary structure, homodimer. Interacts with FtsZ.

The protein localises to the cytoplasm. Its function is as follows. Cell division protein that is part of the divisome complex and is recruited early to the Z-ring. Probably stimulates Z-ring formation, perhaps through the cross-linking of FtsZ protofilaments. Its function overlaps with FtsA. The chain is Cell division protein SepF from Syntrophomonas wolfei subsp. wolfei (strain DSM 2245B / Goettingen).